The following is a 255-amino-acid chain: Short chain dehydrogenase adrF (255 aa).

The NADP(+) site is built by Ile-11, Arg-118, Tyr-150, Lys-154, and Val-183. Residue Tyr-150 is the Proton acceptor of the active site. The active-site Lowers pKa of active site Tyr is the Lys-154.

It belongs to the short-chain dehydrogenases/reductases (SDR) family.

It functions in the pathway secondary metabolite biosynthesis; terpenoid biosynthesis. Short chain dehydrogenase; part of the gene cluster that mediates the biosynthesis of andrastins, meroterpenoid compounds that exhibit inhibitory activity against ras farnesyltransferase, suggesting that they could be promising leads for antitumor agents. The first step of the pathway is the synthesis of 3,5-dimethylorsellinic acid (DMOA) by the polyketide synthase adrD via condensation of one acetyl-CoA starter unit with 3 malonyl-CoA units and 2 methylations. DMAO is then converted to farnesyl-DMAO by the prenyltransferase adrG. The methyltransferase adrK catalyzes the methylation of the carboxyl group of farnesyl-DMAO to farnesyl-DMAO methyl ester which is further converted to epoxyfarnesyl-DMAO methyl ester by the FAD-dependent monooxygenase adrH. The terpene cyclase adrI then catalyzes the carbon skeletal rearrangement to generate the andrastin E, the first compound in the pathway having the andrastin scaffold, with the tetracyclic ring system. The post-cyclization tailoring enzymes adrF, adrE, adrJ, and adrA, are involved in the conversion of andrastin E into andrastin A. The short chain dehydrogenase adrF is responsible for the oxidation of the C-3 a hydroxyl group of andrastin E to yield the corresponding ketone, andrastin D. The ketoreductase adrE stereoselectively reduces the carbonyl moiety to reverse the stereochemistry of the C-3 position to yield andrastin F. The acetyltransferase adrJ is the acetyltransferase that attaches the acetyl group to the C-3 hydroxyl group of andrastin F to yield andrastin C. Finally, the cytochrome P450 monooxygenase adrA catalyzes two sequential oxidation reactions of the C-23 methyl group, to generate the corresponding alcohol andrastin B, and aldehyde andrastin A. The protein is Short chain dehydrogenase adrF of Penicillium rubens (strain ATCC 28089 / DSM 1075 / NRRL 1951 / Wisconsin 54-1255) (Penicillium chrysogenum).